Here is a 107-residue protein sequence, read N- to C-terminus: uncharacterized protein (107 aa).

The segment at 1–32 is disordered; sequence MDSLASGRWRRRRTEELPAAGDAKRACRRSEP. A compositionally biased stretch (basic and acidic residues) spans 22-31; it reads DAKRACRRSE.

This is an uncharacterized protein from Mus musculus (Mouse).